Here is a 609-residue protein sequence, read N- to C-terminus: Replication factor A protein 1 (609 aa).

A compositionally biased stretch (polar residues) spans 130-152; the sequence is QNEQNNASAPRTGISTSTNSFYG. Residues 130-166 form a disordered region; sequence QNEQNNASAPRTGISTSTNSFYGNNAAATAPAPPPMM. The OB DNA-binding region spans 192–278; that stretch reads WTIRARVTNK…NEYELMFERD (87 aa). The segment at 477–498 adopts a C4-type zinc-finger fold; sequence CPAADCNKKVFDQGGSWRCEKC.

The protein belongs to the replication factor A protein 1 family. Component of the heterotrimeric canonical replication protein A complex (RPA).

Its subcellular location is the nucleus. Functionally, as part of the replication protein A (RPA/RP-A), a single-stranded DNA-binding heterotrimeric complex, may play an essential role in DNA replication, recombination and repair. Binds and stabilizes single-stranded DNA intermediates, preventing complementary DNA reannealing and recruiting different proteins involved in DNA metabolism. The polypeptide is Replication factor A protein 1 (ssb1) (Schizosaccharomyces pombe (strain 972 / ATCC 24843) (Fission yeast)).